Consider the following 208-residue polypeptide: UPF0637 protein lp_2332 (208 aa).

The protein belongs to the UPF0637 family.

This chain is UPF0637 protein lp_2332, found in Lactiplantibacillus plantarum (strain ATCC BAA-793 / NCIMB 8826 / WCFS1) (Lactobacillus plantarum).